Reading from the N-terminus, the 208-residue chain is MAVYAVDHPLVKHKLGRLRQSDVPVAEFRALSNEVCRLLTYEATKDLETEKTQVEGWAGPVEVEQIKGKKITVVPILRAGLGMLDGLLDMIPGAKVSVVGMFRNEETLEPVTYYTKLANNIEERQAIIIDPMLATGGTLVATIDLLKKAGCKQIRGLFLVAAPEGIKRVQDAHPDVDIYVAAVDDCLNENGYILPGLGDAGDKIFGTK.

5-phospho-alpha-D-ribose 1-diphosphate-binding positions include arginine 78, arginine 103, and 130–138; that span reads DPMLATGGT. Residues isoleucine 193 and 198–200 each bind uracil; that span reads GDA. Residue aspartate 199 participates in 5-phospho-alpha-D-ribose 1-diphosphate binding.

It belongs to the UPRTase family. The cofactor is Mg(2+).

It carries out the reaction UMP + diphosphate = 5-phospho-alpha-D-ribose 1-diphosphate + uracil. It functions in the pathway pyrimidine metabolism; UMP biosynthesis via salvage pathway; UMP from uracil: step 1/1. Its activity is regulated as follows. Allosterically activated by GTP. In terms of biological role, catalyzes the conversion of uracil and 5-phospho-alpha-D-ribose 1-diphosphate (PRPP) to UMP and diphosphate. The polypeptide is Uracil phosphoribosyltransferase (Oleidesulfovibrio alaskensis (strain ATCC BAA-1058 / DSM 17464 / G20) (Desulfovibrio alaskensis)).